We begin with the raw amino-acid sequence, 226 residues long: 7-cyano-7-deazaguanine synthase (226 aa).

10 to 20 (LSGGLDSATAA) contributes to the ATP binding site. Residues C191, C199, C202, and C205 each contribute to the Zn(2+) site.

This sequence belongs to the QueC family. Zn(2+) is required as a cofactor.

It catalyses the reaction 7-carboxy-7-deazaguanine + NH4(+) + ATP = 7-cyano-7-deazaguanine + ADP + phosphate + H2O + H(+). It participates in purine metabolism; 7-cyano-7-deazaguanine biosynthesis. Catalyzes the ATP-dependent conversion of 7-carboxy-7-deazaguanine (CDG) to 7-cyano-7-deazaguanine (preQ(0)). This chain is 7-cyano-7-deazaguanine synthase, found in Parasynechococcus marenigrum (strain WH8102).